Reading from the N-terminus, the 98-residue chain is NADH-ubiquinone oxidoreductase chain 4L (98 aa).

3 helical membrane passes run 2–22 (PSISTNIVLAFITALLGMLIF), 29–49 (SLLCLEGMMLSMFILSTLTIL), and 61–81 (ILLLVFAACEAAVGLALLVTV).

The protein belongs to the complex I subunit 4L family. In terms of assembly, core subunit of respiratory chain NADH dehydrogenase (Complex I) which is composed of 45 different subunits.

It localises to the mitochondrion inner membrane. It carries out the reaction a ubiquinone + NADH + 5 H(+)(in) = a ubiquinol + NAD(+) + 4 H(+)(out). Its function is as follows. Core subunit of the mitochondrial membrane respiratory chain NADH dehydrogenase (Complex I) which catalyzes electron transfer from NADH through the respiratory chain, using ubiquinone as an electron acceptor. Part of the enzyme membrane arm which is embedded in the lipid bilayer and involved in proton translocation. The sequence is that of NADH-ubiquinone oxidoreductase chain 4L (MT-ND4L) from Eulemur rubriventer (Red-bellied lemur).